Reading from the N-terminus, the 223-residue chain is Neurotrophic factor BDNF precursor form (223 aa).

Residues 1–5 (SCMKA) form the signal peptide. A propeptide spanning residues 6-114 (APMKEASIRG…AANMSMRVRR (109 aa)) is cleaved from the precursor. A glycan (N-linked (GlcNAc...) asparagine) is linked at asparagine 107. 2 disulfide bridges follow: cysteine 127/cysteine 194 and cysteine 172/cysteine 223.

This sequence belongs to the NGF-beta family.

Its subcellular location is the secreted. Promotes the survival of neuronal populations that are all located either in the central nervous system or directly connected to it. The protein is Neurotrophic factor BDNF precursor form (BDNF) of Tropidophis haetianus (Haitian dwarf boa).